The primary structure comprises 628 residues: Biosynthetic arginine decarboxylase (628 aa).

The residue at position 99 (Lys-99) is an N6-(pyridoxal phosphate)lysine. Residue Val-279–Tyr-289 participates in substrate binding.

This sequence belongs to the Orn/Lys/Arg decarboxylase class-II family. SpeA subfamily. Mg(2+) serves as cofactor. The cofactor is pyridoxal 5'-phosphate.

The catalysed reaction is L-arginine + H(+) = agmatine + CO2. In terms of biological role, catalyzes the biosynthesis of agmatine from arginine. This is Biosynthetic arginine decarboxylase from Xanthomonas campestris pv. campestris (strain ATCC 33913 / DSM 3586 / NCPPB 528 / LMG 568 / P 25).